Here is a 336-residue protein sequence, read N- to C-terminus: Meiotically up-regulated gene 33 protein (336 aa).

Residues 232 to 336 (ISEDDGLKRG…KPSRFSWGRS (105 aa)) are disordered. A compositionally biased stretch (polar residues) spans 250-262 (TFSNDSRSLSSYA).

It localises to the cytoplasm. In terms of biological role, has a role in meiosis. In Schizosaccharomyces pombe (strain 972 / ATCC 24843) (Fission yeast), this protein is Meiotically up-regulated gene 33 protein (mug33).